A 507-amino-acid polypeptide reads, in one-letter code: Tryptophan aminotransferase-related protein 2 (507 aa).

Residues 91 to 135 (PPPHHHHHDAGLATRSSDAAVHRRARTASSMAPSTGKPAVTTDSV) are disordered. Pyridoxal 5'-phosphate contacts are provided by residues tyrosine 169, 211 to 212 (ST), asparagine 282, 304 to 307 (DLAY), 327 to 330 (TVSK), and arginine 338. N6-(pyridoxal phosphate)lysine is present on lysine 330.

The protein belongs to the alliinase family. The cofactor is pyridoxal 5'-phosphate. In terms of tissue distribution, widely expressed.

The enzyme catalyses L-tryptophan + 2-oxoglutarate = indole-3-pyruvate + L-glutamate. The protein operates within plant hormone metabolism; auxin biosynthesis. In terms of biological role, probable tryptophan aminotransferase involved in auxin (IAA) biosynthesis. Required for auxin production to initiate multiple change in growth in response to environmental and developmental cues. Functions upstream of YUCCA1 in auxin biosynthesis. Required for polar auxin transport. The protein is Tryptophan aminotransferase-related protein 2 of Oryza sativa subsp. japonica (Rice).